The chain runs to 352 residues: N-lysine methyltransferase KMT5A (352 aa).

Residues 21-51 (AVAATAPGPEMVERRGPGRPRTNGENVFTGQ) are disordered. A Phosphoserine modification is found at serine 59. Positions 87-202 (PLAGIYRKRD…KSKAELQSEE (116 aa)) are disordered. Over residues 109-121 (MKAEEQKIKDARR) the composition is skewed to basic and acidic residues. Threonine 140 carries the phosphothreonine modification. The segment covering 156-172 (GLKKPVRGKQAPRKKAQ) has biased composition (basic residues). An SET domain is found at 216-337 (EGMKIDLIDG…AGEELLYDYG (122 aa)). Residues 226–228 (KGR), tyrosine 271, and 298–299 (NH) contribute to the S-adenosyl-L-methionine site.

Belongs to the class V-like SAM-binding methyltransferase superfamily. Histone-lysine methyltransferase family. PR/SET subfamily. Interacts with L3MBTL1. Interacts with SIRT2 (phosphorylated form); the interaction is direct, stimulates KMT5A-mediated methyltransferase activity at histone H4 'Lys-20' (H4K20me1) and is increased in a H(2)O(2)-induced oxidative stress-dependent manner. In terms of processing, ubiquitinated and degraded by the DCX(DTL) complex.

It localises to the nucleus. The protein localises to the chromosome. It catalyses the reaction L-lysyl(20)-[histone H4] + S-adenosyl-L-methionine = N(6)-methyl-L-lysyl(20)-[histone H4] + S-adenosyl-L-homocysteine + H(+). The catalysed reaction is L-lysyl-[protein] + S-adenosyl-L-methionine = N(6)-methyl-L-lysyl-[protein] + S-adenosyl-L-homocysteine + H(+). Functionally, protein-lysine N-methyltransferase that monomethylates both histones and non-histone proteins. Specifically monomethylates 'Lys-20' of histone H4 (H4K20me1). H4K20me1 is enriched during mitosis and represents a specific tag for epigenetic transcriptional repression. Mainly functions in euchromatin regions, thereby playing a central role in the silencing of euchromatic genes. Required for cell proliferation, probably by contributing to the maintenance of proper higher-order structure of DNA during mitosis. Involved in chromosome condensation and proper cytokinesis. Nucleosomes are preferred as substrate compared to free histones. Mediates monomethylation of p53/TP53 at 'Lys-382', leading to repress p53/TP53-target genes. Plays a negative role in TGF-beta response regulation and a positive role in cell migration. The sequence is that of N-lysine methyltransferase KMT5A from Bos taurus (Bovine).